The chain runs to 188 residues: Peptidyl-tRNA hydrolase (188 aa).

Position 15 (Phe-15) interacts with tRNA. His-20 acts as the Proton acceptor in catalysis. Positions 64, 66, and 112 each coordinate tRNA.

The protein belongs to the PTH family. As to quaternary structure, monomer.

It is found in the cytoplasm. It carries out the reaction an N-acyl-L-alpha-aminoacyl-tRNA + H2O = an N-acyl-L-amino acid + a tRNA + H(+). In terms of biological role, hydrolyzes ribosome-free peptidyl-tRNAs (with 1 or more amino acids incorporated), which drop off the ribosome during protein synthesis, or as a result of ribosome stalling. Catalyzes the release of premature peptidyl moieties from peptidyl-tRNA molecules trapped in stalled 50S ribosomal subunits, and thus maintains levels of free tRNAs and 50S ribosomes. The sequence is that of Peptidyl-tRNA hydrolase from Borreliella afzelii (strain PKo) (Borrelia afzelii).